We begin with the raw amino-acid sequence, 530 residues long: Autoinducer-2 kinase (530 aa).

The protein belongs to the FGGY kinase family.

The protein resides in the cytoplasm. It carries out the reaction (S)-4,5-dihydroxypentane-2,3-dione + ATP = (2S)-2-hydroxy-3,4-dioxopentyl phosphate + ADP + H(+). Functionally, catalyzes the phosphorylation of autoinducer-2 (AI-2) to phospho-AI-2, which subsequently inactivates the transcriptional regulator LsrR and leads to the transcription of the lsr operon. Phosphorylates the ring-open form of (S)-4,5-dihydroxypentane-2,3-dione (DPD), which is the precursor to all AI-2 signaling molecules, at the C5 position. This is Autoinducer-2 kinase from Escherichia coli O139:H28 (strain E24377A / ETEC).